Reading from the N-terminus, the 393-residue chain is NAD(P)H-quinone oxidoreductase subunit H, chloroplastic (393 aa).

The protein belongs to the complex I 49 kDa subunit family. NDH is composed of at least 16 different subunits, 5 of which are encoded in the nucleus.

It is found in the plastid. It localises to the chloroplast thylakoid membrane. It carries out the reaction a plastoquinone + NADH + (n+1) H(+)(in) = a plastoquinol + NAD(+) + n H(+)(out). The enzyme catalyses a plastoquinone + NADPH + (n+1) H(+)(in) = a plastoquinol + NADP(+) + n H(+)(out). NDH shuttles electrons from NAD(P)H:plastoquinone, via FMN and iron-sulfur (Fe-S) centers, to quinones in the photosynthetic chain and possibly in a chloroplast respiratory chain. The immediate electron acceptor for the enzyme in this species is believed to be plastoquinone. Couples the redox reaction to proton translocation, and thus conserves the redox energy in a proton gradient. This chain is NAD(P)H-quinone oxidoreductase subunit H, chloroplastic, found in Jasminum nudiflorum (Winter jasmine).